Here is a 938-residue protein sequence, read N- to C-terminus: AP-4 complex subunit epsilon (938 aa).

HEAT repeat units follow at residues 118 to 153 (DLIILIVNTIQKDLRSDNYLVVCAALNAICRLINEE), 154 to 190 (TIPAVLPQVVELLNHQKEAVRKKAIMALHRFHRKSPS), 192 to 227 (VSHLVSNFRKRLCDNDPGVMGATLCPLFDLISEDVN), 234 to 272 (SSFVSILKQVTERRLPKSYDYHQMPAPFIQIKLLKIMAL), 321 to 358 (KLLEAAADAISKFLKSDSHNLKYMGIDGLGRLIKISPD), 359 to 395 (IAEQHQLAVIDCLEDPDDTLKRKTFELLYKMTKSSNV), 397 to 431 (VIVDRMIDYMISINDNHYKTEIASRCVELAEQFAP), 454 to 495 (KVAH…EPKL), 517 to 556 (YSASYISGKLCDVADAYSSDETVKGYAVSALMKIYAFEIA), and 562 to 601 (DVLPECQSLIEELLASHSTDLQQRAYELQALLALDARAVE). Disordered stretches follow at residues 690-712 (EPSYYSESHQPISTSLVSERESS), 725-867 (WGRP…VMGL), 880-912 (VDSLLSELSDSSKGNSRTYQPQTSKGPNTKEAL), and 919-938 (RQMGVNPTSQNPTLFKDLLG). A compositionally biased stretch (polar residues) spans 694 to 706 (YSESHQPISTSLV). Low complexity predominate over residues 728 to 744 (PSYQSTTAASSTTPQAA). Residues 764–779 (SSYEPKKPEIDPEKQR) are compositionally biased toward basic and acidic residues. Over residues 808 to 821 (ANKTATVPKENQTP) the composition is skewed to polar residues. Composition is skewed to low complexity over residues 853 to 863 (DSSSQDGGSSD) and 880 to 891 (VDSLLSELSDSS). An HEAT 11 repeat occupies 874-911 (VTTTTSVDSLLSELSDSSKGNSRTYQPQTSKGPNTKEA). The span at 892–906 (KGNSRTYQPQTSKGP) shows a compositional bias: polar residues.

Belongs to the adaptor complexes large subunit family. Adaptor protein complex 4 (AP-4) is a heterotetramer composed of two large adaptins (epsilon-type subunit and beta-type subunit), a medium adaptin (mu-type subunit) and a small adaptin (sigma-type subunit).

The protein localises to the golgi apparatus. Its subcellular location is the trans-Golgi network. The protein resides in the membrane. It is found in the coated pit. Subunit of novel type of clathrin- or non-clathrin-associated protein coat involved in targeting proteins from the trans-Golgi network (TGN) to the endosomal-lysosomal system. This is AP-4 complex subunit epsilon from Arabidopsis thaliana (Mouse-ear cress).